A 306-amino-acid chain; its full sequence is Acetyl-coenzyme A carboxylase carboxyl transferase subunit beta (306 aa).

A CoA carboxyltransferase N-terminal domain is found at 27-296; that stretch reads LWHKCPSCEA…PRFVAPVIEP (270 aa). Residues C31, C34, C50, and C53 each contribute to the Zn(2+) site. Residues 31–53 form a C4-type zinc finger; sequence CPSCEAVLYRPELEKTLDVCPKC.

This sequence belongs to the AccD/PCCB family. Acetyl-CoA carboxylase is a heterohexamer composed of biotin carboxyl carrier protein (AccB), biotin carboxylase (AccC) and two subunits each of ACCase subunit alpha (AccA) and ACCase subunit beta (AccD). Zn(2+) is required as a cofactor.

It localises to the cytoplasm. It carries out the reaction N(6)-carboxybiotinyl-L-lysyl-[protein] + acetyl-CoA = N(6)-biotinyl-L-lysyl-[protein] + malonyl-CoA. It participates in lipid metabolism; malonyl-CoA biosynthesis; malonyl-CoA from acetyl-CoA: step 1/1. Component of the acetyl coenzyme A carboxylase (ACC) complex. Biotin carboxylase (BC) catalyzes the carboxylation of biotin on its carrier protein (BCCP) and then the CO(2) group is transferred by the transcarboxylase to acetyl-CoA to form malonyl-CoA. The polypeptide is Acetyl-coenzyme A carboxylase carboxyl transferase subunit beta (Pseudomonas savastanoi pv. phaseolicola (strain 1448A / Race 6) (Pseudomonas syringae pv. phaseolicola (strain 1448A / Race 6))).